The following is a 284-amino-acid chain: Protoheme IX farnesyltransferase (284 aa).

The next 8 helical transmembrane spans lie at 13–33 (IIIG…FPFF), 35–55 (VFLF…SCIF), 87–107 (IFAS…VNIL), 108–128 (SMFL…FFLK), 133–153 (YSTF…HTAI), 162–182 (FLLF…IAIL), 224–244 (FLGY…FYWL), and 264–284 (FYYS…DFIF).

Belongs to the UbiA prenyltransferase family. Protoheme IX farnesyltransferase subfamily.

The protein resides in the cell membrane. It catalyses the reaction heme b + (2E,6E)-farnesyl diphosphate + H2O = Fe(II)-heme o + diphosphate. It participates in porphyrin-containing compound metabolism; heme O biosynthesis; heme O from protoheme: step 1/1. Functionally, converts heme B (protoheme IX) to heme O by substitution of the vinyl group on carbon 2 of heme B porphyrin ring with a hydroxyethyl farnesyl side group. The polypeptide is Protoheme IX farnesyltransferase (Buchnera aphidicola subsp. Schizaphis graminum (strain Sg)).